The following is a 248-amino-acid chain: 2,3-dihydro-2,3-dihydroxybenzoate dehydrogenase (248 aa).

Residue 9–33 participates in NAD(+) binding; sequence WVTGAGKGIGYATALAFVEAGAKVT. Substrate is bound at residue S131. The active-site Proton acceptor is Y144.

The protein belongs to the short-chain dehydrogenases/reductases (SDR) family. As to quaternary structure, homotetramer; dimer of dimers. EntA and EntE interact together.

It carries out the reaction (2S,3S)-2,3-dihydroxy-2,3-dihydrobenzoate + NAD(+) = 2,3-dihydroxybenzoate + NADH + H(+). Its pathway is siderophore biosynthesis; enterobactin biosynthesis. With respect to regulation, inhibited by cis-2-hydroxy-3-cyclohexen-1-carboxylate, cis-2-hydroxycyclohexane-1-carboxylate and trans-2-hydroxycyclohexane-1-carboxylate. In terms of biological role, involved in the biosynthesis of the siderophore enterobactin (enterochelin), which is a macrocyclic trimeric lactone of N-(2,3-dihydroxybenzoyl)-serine. Catalyzes the reversible NAD-dependent oxidation of the C3-hydroxyl group of 2,3-dihydro-2,3-dihydroxybenzoate (2,3-diDHB), producing the transient intermediate 2-hydroxy-3-oxo-4,6-cyclohexadiene-1-carboxylate, which undergoes rapid aromatization to the final product, 2,3-dihydroxybenzoate (2,3-DHB). Only the compounds with a C3-hydroxyl group such as methyl 2,3-dihydro-2,3-dihydroxybenzoate, methyl-3-hydroxy-1,4-cyclohexadiene-1-carboxylate, trans-3-hydroxy-2-cyclohexene-1-carboxylate, cis-3-hydroxy-4-cyclohexene-1-carboxylate, cis-3-hydroxycyclohexane-1-carboxylic acid are oxidized to the corresponding ketone products. The stereospecificity of the C3 allylic alcohol group oxidation is 3R in a 1R,3R dihydro substrate. It can also increase the DHB-AMP ligase activity of EntE by interaction EntE. This chain is 2,3-dihydro-2,3-dihydroxybenzoate dehydrogenase, found in Escherichia coli (strain K12).